The primary structure comprises 284 residues: uncharacterized protein (284 aa).

Polar residues predominate over residues 1 to 27 (MSNLPTSTPVSPSNLAEENPKSNNPES). Disordered regions lie at residues 1–29 (MSNL…ESSE) and 248–284 (TRDS…LKKK).

This is an uncharacterized protein from Caenorhabditis elegans.